The sequence spans 350 residues: Beta-ketoacyl-[acyl-carrier-protein] synthase III (350 aa).

Active-site residues include C120 and H256. Positions 257–261 (QANVR) are ACP-binding. N286 is a catalytic residue.

The protein belongs to the thiolase-like superfamily. FabH family. Homodimer.

The protein localises to the cytoplasm. The catalysed reaction is malonyl-[ACP] + acetyl-CoA + H(+) = 3-oxobutanoyl-[ACP] + CO2 + CoA. It functions in the pathway lipid metabolism; fatty acid biosynthesis. Its function is as follows. Catalyzes the condensation reaction of fatty acid synthesis by the addition to an acyl acceptor of two carbons from malonyl-ACP. Catalyzes the first condensation reaction which initiates fatty acid synthesis and may therefore play a role in governing the total rate of fatty acid production. Possesses both acetoacetyl-ACP synthase and acetyl transacylase activities. Its substrate specificity determines the biosynthesis of branched-chain and/or straight-chain of fatty acids. The protein is Beta-ketoacyl-[acyl-carrier-protein] synthase III of Deinococcus deserti (strain DSM 17065 / CIP 109153 / LMG 22923 / VCD115).